We begin with the raw amino-acid sequence, 139 residues long: Nucleoside diphosphate kinase (139 aa).

Lys-10, Phe-58, Arg-86, Thr-92, Arg-104, and Asn-114 together coordinate ATP. Residue His-117 is the Pros-phosphohistidine intermediate of the active site.

It belongs to the NDK family. Homotetramer. Requires Mg(2+) as cofactor.

The protein localises to the cytoplasm. The catalysed reaction is a 2'-deoxyribonucleoside 5'-diphosphate + ATP = a 2'-deoxyribonucleoside 5'-triphosphate + ADP. It carries out the reaction a ribonucleoside 5'-diphosphate + ATP = a ribonucleoside 5'-triphosphate + ADP. Functionally, major role in the synthesis of nucleoside triphosphates other than ATP. The ATP gamma phosphate is transferred to the NDP beta phosphate via a ping-pong mechanism, using a phosphorylated active-site intermediate. The protein is Nucleoside diphosphate kinase of Nocardia farcinica (strain IFM 10152).